Reading from the N-terminus, the 155-residue chain is Ribosomal RNA large subunit methyltransferase H (155 aa).

Residues Leu72, Gly103, and 122 to 127 (FGRMVW) contribute to the S-adenosyl-L-methionine site.

This sequence belongs to the RNA methyltransferase RlmH family. Homodimer.

The protein localises to the cytoplasm. It carries out the reaction pseudouridine(1915) in 23S rRNA + S-adenosyl-L-methionine = N(3)-methylpseudouridine(1915) in 23S rRNA + S-adenosyl-L-homocysteine + H(+). Specifically methylates the pseudouridine at position 1915 (m3Psi1915) in 23S rRNA. The polypeptide is Ribosomal RNA large subunit methyltransferase H (Paracoccus denitrificans (strain Pd 1222)).